A 240-amino-acid polypeptide reads, in one-letter code: Lysoplasmalogenase TMEM86A (240 aa).

The Cytoplasmic portion of the chain corresponds to 1 to 21; sequence MVSPVTVVKSEGPKLVPFFKA. A helical membrane pass occupies residues 22–42; the sequence is TCVYFVLWLPSSSPSWVSTLI. Position 43 (Lys-43) is a topological domain, extracellular. The helical transmembrane segment at 44 to 64 threads the bilayer; that stretch reads CLPIFCLWLFLLAHGLGFLLA. At 65–70 the chain is on the cytoplasmic side; sequence HPSATR. The helical transmembrane segment at 71-91 threads the bilayer; that stretch reads IFVGLVFSAVGDAFLIWQDQG. Residue Tyr-92 is a topological domain, extracellular. Residues 93 to 113 form a helical membrane-spanning segment; sequence FVHGLLMFAVTHMFYASAFGM. Topologically, residues 114–115 are cytoplasmic; sequence QP. A helical membrane pass occupies residues 116–136; sequence LALRTGLVMAALSGLCYALLY. The Extracellular portion of the chain corresponds to 137–138; the sequence is PC. A helical membrane pass occupies residues 139–159; it reads LSGAFTYLVGVYVALIGFMGW. Topologically, residues 160 to 174 are cytoplasmic; the sequence is RAMAGLRLAGADWRW. Residues 175-195 form a helical membrane-spanning segment; that stretch reads TELAAGSGALFFIISDLTIAL. At 196-206 the chain is on the extracellular side; that stretch reads NKFCFPVPYSR. The helical transmembrane segment at 207–227 threads the bilayer; the sequence is ALIMSTYYVAQMLVALSAVES. Residues 228–240 lie on the Cytoplasmic side of the membrane; sequence REPVEHYRLTKAN.

Belongs to the TMEM86 family. In terms of tissue distribution, expressed in the macrophages.

It is found in the endoplasmic reticulum membrane. It carries out the reaction a 1-O-(1Z-alkenyl)-sn-glycero-3-phosphocholine + H2O = a 2,3-saturated aldehyde + sn-glycerol 3-phosphocholine. It catalyses the reaction a 1-O-(1Z-alkenyl)-sn-glycero-3-phosphoethanolamine + H2O = a 2,3-saturated aldehyde + sn-glycero-3-phosphoethanolamine. Its function is as follows. Catalyzes the hydrolysis of the vinyl ether bond of choline or ethanolamine lysoplasmalogens, forming fatty aldehyde and glycerophosphocholine or glycerophosphoethanolamine, respectively and is specific for the sn-2-deacylated (lyso) form of plasmalogen. Plays an important role in lysoplasmalogen metabolism in the adipocyte tissue and macrophages. The chain is Lysoplasmalogenase TMEM86A (TMEM86A) from Homo sapiens (Human).